We begin with the raw amino-acid sequence, 309 residues long: Homoserine kinase (309 aa).

ATP is bound at residue 91–101 (PIGSGLGSSAC).

The protein belongs to the GHMP kinase family. Homoserine kinase subfamily.

The protein localises to the cytoplasm. The catalysed reaction is L-homoserine + ATP = O-phospho-L-homoserine + ADP + H(+). It functions in the pathway amino-acid biosynthesis; L-threonine biosynthesis; L-threonine from L-aspartate: step 4/5. Functionally, catalyzes the ATP-dependent phosphorylation of L-homoserine to L-homoserine phosphate. This chain is Homoserine kinase, found in Salmonella arizonae (strain ATCC BAA-731 / CDC346-86 / RSK2980).